Here is a 172-residue protein sequence, read N- to C-terminus: Sec-independent protein translocase protein TatB (172 aa).

The chain crosses the membrane as a helical span at residues 1-21 (MIDLGISKLALIGAVALVVIG). The segment at 97–129 (GDPASRQTATQAAEWRPAPAKSRNGRNSWRNKQ) is disordered.

The protein belongs to the TatB family. As to quaternary structure, the Tat system comprises two distinct complexes: a TatABC complex, containing multiple copies of TatA, TatB and TatC subunits, and a separate TatA complex, containing only TatA subunits. Substrates initially bind to the TatABC complex, which probably triggers association of the separate TatA complex to form the active translocon.

The protein resides in the cell inner membrane. In terms of biological role, part of the twin-arginine translocation (Tat) system that transports large folded proteins containing a characteristic twin-arginine motif in their signal peptide across membranes. Together with TatC, TatB is part of a receptor directly interacting with Tat signal peptides. TatB may form an oligomeric binding site that transiently accommodates folded Tat precursor proteins before their translocation. In Ralstonia nicotianae (strain ATCC BAA-1114 / GMI1000) (Ralstonia solanacearum), this protein is Sec-independent protein translocase protein TatB.